The following is a 312-amino-acid chain: Pyridoxal 5'-phosphate synthase subunit PDX1 (312 aa).

Aspartate 43 is a D-ribose 5-phosphate binding site. The active-site Schiff-base intermediate with D-ribose 5-phosphate is the lysine 100. Residue glycine 172 coordinates D-ribose 5-phosphate. A D-glyceraldehyde 3-phosphate-binding site is contributed by arginine 184. D-ribose 5-phosphate is bound by residues glycine 233 and 254–255 (GS).

This sequence belongs to the PdxS/SNZ family.

It carries out the reaction aldehydo-D-ribose 5-phosphate + D-glyceraldehyde 3-phosphate + L-glutamine = pyridoxal 5'-phosphate + L-glutamate + phosphate + 3 H2O + H(+). It participates in cofactor biosynthesis; pyridoxal 5'-phosphate biosynthesis. In terms of biological role, catalyzes the formation of pyridoxal 5'-phosphate from ribose 5-phosphate (RBP), glyceraldehyde 3-phosphate (G3P) and ammonia. The ammonia is provided by PDX2. Can also use ribulose 5-phosphate and dihydroxyacetone phosphate as substrates, resulting from enzyme-catalyzed isomerization of RBP and G3P, respectively. Also plays an indirect role in resistance to singlet oxygen-generating photosensitizers. This Phaseolus vulgaris (Kidney bean) protein is Pyridoxal 5'-phosphate synthase subunit PDX1 (PDX1).